The chain runs to 385 residues: ATP synthase subunit a-1 (385 aa).

A propeptide spanning residues Met1–Ala133 is cleaved from the precursor. 7 helical membrane passes run Phe154 to Ile174, Phe220 to Ile240, His249 to Phe269, Phe276 to Leu296, Met316 to Met336, Ile339 to Glu359, and Val362 to Ile382.

This sequence belongs to the ATPase A chain family. As to quaternary structure, F-type ATPases have 2 components, CF(1) - the catalytic core - and CF(0) - the membrane proton channel. CF(1) has five subunits: alpha(3), beta(3), gamma(1), delta(1), epsilon(1). CF(0) has three main subunits: a, b and c.

It is found in the mitochondrion inner membrane. Mitochondrial membrane ATP synthase (F(1)F(0) ATP synthase or Complex V) produces ATP from ADP in the presence of a proton gradient across the membrane which is generated by electron transport complexes of the respiratory chain. F-type ATPases consist of two structural domains, F(1) - containing the extramembraneous catalytic core and F(0) - containing the membrane proton channel, linked together by a central stalk and a peripheral stalk. During catalysis, ATP synthesis in the catalytic domain of F(1) is coupled via a rotary mechanism of the central stalk subunits to proton translocation. Key component of the proton channel; it may play a direct role in the translocation of protons across the membrane. In Arabidopsis thaliana (Mouse-ear cress), this protein is ATP synthase subunit a-1 (ATP6-1).